A 459-amino-acid chain; its full sequence is MAP kinase-interacting serine/threonine-protein kinase 2 (459 aa).

The interval Leu-28–Lys-67 is disordered. Residues Lys-60–Lys-66 carry the Nuclear localization signal motif. A Phosphoserine modification is found at Ser-74. Residues Gln-84 to Val-368 form the Protein kinase domain. Residues Leu-90–Val-98 and Lys-113 contribute to the ATP site. Glu-160–Met-162 provides a ligand contact to staurosporine. The active-site Proton acceptor is Asp-205. Glu-209 is a binding site for staurosporine. A phosphothreonine mark is found at Thr-244 and Thr-249. The Zn(2+) site is built by Cys-299, Cys-311, and Cys-314. Position 379 is a phosphothreonine (Thr-379). A phosphoserine mark is found at Ser-431 and Ser-434. An MAP kinase binding motif is present at residues Leu-438–Arg-442. Ser-446 is modified (phosphoserine). At Thr-450 the chain carries Phosphothreonine.

Belongs to the protein kinase superfamily. CAMK Ser/Thr protein kinase family. Monomer. Interacts with the C-terminal regions of EIF4G1 and EIF4G2; this interaction is promoted when MAPK pathways are repressed but repressed upon ERK proteins activation. Also binds to dephosphorylated MAPK3/ERK1 and MAPK1/ER2K. Interaction with phosphorylated MAPK3/ERK1 and MAPK1/ER2K protects it from dephosphorylation and inactivation. Interacts with ESR2 and EIF4E in the nucleus. Mg(2+) serves as cofactor. Requires Zn(2+) as cofactor. Post-translationally, dual phosphorylation of Thr-244 and Thr-249 activates the kinase. Phosphorylation of Thr-379 activates the kinase. Phosphorylated upon arsenic trioxide As(2)O(3) treatment. Phosphorylated by MAPK1/ERK2, MAPK11 and MAPK14. Dephosphorylated by PP2A.

It is found in the cytoplasm. The protein localises to the nucleus. It localises to the PML body. The catalysed reaction is L-seryl-[protein] + ATP = O-phospho-L-seryl-[protein] + ADP + H(+). It catalyses the reaction L-threonyl-[protein] + ATP = O-phospho-L-threonyl-[protein] + ADP + H(+). With respect to regulation, inhibited by CGP57380 and staurosporine. In terms of biological role, serine/threonine-protein kinase that phosphorylates SFPQ/PSF, HNRNPA1 and EIF4E. May play a role in the response to environmental stress and cytokines. Appears to regulate translation by phosphorylating EIF4E, thus increasing the affinity of this protein for the 7-methylguanosine-containing mRNA cap. Required for mediating PP2A-inhibition-induced EIF4E phosphorylation. Triggers EIF4E shuttling from cytoplasm to nucleus. Enhances the formation of EIF4F complex in pachytene spermatocytes, thus promoting mRNA translation during spermatogenesis. Displays a high basal kinase activity. Acts as a mediator of the suppressive effects of IFNgamma on hematopoiesis. Negative regulator for signals that control generation of arsenic trioxide As(2)O(3)-dependent apoptosis and anti-leukemic responses. Involved in anti-apoptotic signaling in response to serum withdrawal. The protein is MAP kinase-interacting serine/threonine-protein kinase 2 (Mknk2) of Rattus norvegicus (Rat).